The primary structure comprises 258 residues: Synapse differentiation-inducing gene protein 1 (258 aa).

The Cytoplasmic segment spans residues 1–181 (MDGIIEQKSM…NFLMMPPRDH (181 aa)). S137 carries the post-translational modification Phosphoserine. Residues 182–202 (LGLSVFSMLCCFWPLGIAAFY) form a helical membrane-spanning segment. The Extracellular segment spans residues 203–228 (LSHETNKAVAKGDLHQASTSSRRALF). An intramembrane region (helical) is located at residues 229–249 (LAVLSITIGTGVYVGVAVALI). Over 250 to 258 (AYLSKNNHL) the chain is Extracellular.

It belongs to the CD225/Dispanin family. In terms of assembly, homodimer. Interacts with GRIA1 and GRIA2.

The protein localises to the cell membrane. The protein resides in the early endosome membrane. Its subcellular location is the postsynaptic density membrane. It is found in the synapse. It localises to the cell projection. The protein localises to the dendrite. The protein resides in the dendritic spine. Functionally, may regulate AMPA receptor content at nascent synapses, and have a role in postsynaptic development and maturation. This Homo sapiens (Human) protein is Synapse differentiation-inducing gene protein 1 (SYNDIG1).